Reading from the N-terminus, the 116-residue chain is Cysteine proteinase inhibitor 1 (116 aa).

An N-terminal signal peptide occupies residues 1 to 26 (MVPKPLSLLLFLLLALSAAVVGGRKL). Residues 30 to 89 (GGWRPIESLNSAEVQDVAQFAVSEHNKQANDELQYQSVVRGYTQVVAGTNYRLVIAAKDG) form the Cystatin domain. Positions 73 to 77 (QVVAG) match the Secondary area of contact motif. Residue Asn109 is glycosylated (N-linked (GlcNAc...) asparagine).

This sequence belongs to the cystatin family. Phytocystatin subfamily. Post-translationally, glycosylated.

It is found in the secreted. Functionally, specific inhibitor of papain family cysteine proteinases. Inhibits papain, chymopapain, bromelain, ficin, human cathepsins B, H and L, actinidain and house dustmite endopeptidase 1, but does not inhibit human bleomycin hydrolase. Inhibits papain with an IC(50) of 2.47 nM. Does not inhibit cysteine proteinases belonging to other families including clostripain, streptopain and calpain. The protein is Cysteine proteinase inhibitor 1 of Actinidia deliciosa (Kiwi).